The sequence spans 281 residues: uncharacterized protein (281 aa).

It localises to the plastid. It is found in the chloroplast. This is an uncharacterized protein from Euglena gracilis.